A 357-amino-acid polypeptide reads, in one-letter code: Peptide chain release factor 1 (357 aa).

Gln235 is subject to N5-methylglutamine. Positions 282-294 (RQKADTERSESRR) are enriched in basic and acidic residues. A disordered region spans residues 282–308 (RQKADTERSESRRSQVGSGDRSERIRT).

This sequence belongs to the prokaryotic/mitochondrial release factor family. Post-translationally, methylated by PrmC. Methylation increases the termination efficiency of RF1.

Its subcellular location is the cytoplasm. In terms of biological role, peptide chain release factor 1 directs the termination of translation in response to the peptide chain termination codons UAG and UAA. This chain is Peptide chain release factor 1, found in Brucella anthropi (strain ATCC 49188 / DSM 6882 / CCUG 24695 / JCM 21032 / LMG 3331 / NBRC 15819 / NCTC 12168 / Alc 37) (Ochrobactrum anthropi).